Reading from the N-terminus, the 152-residue chain is MAPSRKNKVAKEEVQVSLGPQVRDGEVVFGVAHIYASFNDTFVHVTDLSGKETISRVTGGMKVKADRDEASPYAAMLAAQDVAEKCKSLGITALHIKLRATGGNRTKTPGPGAQSALRALARSSMKIGRIEDVTPIPSDSTRRKGGRRGRRL.

A disordered region spans residues 131–152 (EDVTPIPSDSTRRKGGRRGRRL). Over residues 143–152 (RKGGRRGRRL) the composition is skewed to basic residues.

Belongs to the universal ribosomal protein uS11 family.

The protein is Small ribosomal subunit protein uS11B of Anopheles gambiae (African malaria mosquito).